The primary structure comprises 462 residues: Proteases secretion protein PrtF (462 aa).

The first 23 residues, 1 to 23 (MRRKAVLLTVVLSLSGGSAQAMG), serve as a signal peptide directing secretion.

It belongs to the outer membrane factor (OMF) (TC 1.B.17) family.

It localises to the cell outer membrane. Functionally, involved in the secretion of proteases A, B, C and G. The protein is Proteases secretion protein PrtF (prtF) of Dickeya chrysanthemi (Pectobacterium chrysanthemi).